Consider the following 401-residue polypeptide: UDP-GlcNAc:betaGal beta-1,3-N-acetylglucosaminyltransferase 9 (401 aa).

The Cytoplasmic segment spans residues 1-10 (MRRRLRLRRE). A helical; Signal-anchor for type II membrane protein transmembrane segment spans residues 11–31 (ALLTLLLGATLGLLLYAQQEG). Residues 32 to 401 (AAPTTSAPRA…VPAGPFQWGP (370 aa)) lie on the Lumenal side of the membrane. The disordered stretch occupies residues 33–85 (APTTSAPRAQGRAAPGPTPGLRVFQAPDTGAAPPAYEGDTPEPPTPTGPFDFG). A compositionally biased stretch (low complexity) spans 38–47 (APRAQGRAAP).

Belongs to the glycosyltransferase 31 family.

Its subcellular location is the golgi apparatus membrane. This is UDP-GlcNAc:betaGal beta-1,3-N-acetylglucosaminyltransferase 9 from Bos taurus (Bovine).